Here is a 534-residue protein sequence, read N- to C-terminus: Pentatricopeptide repeat-containing protein At5g59600 (534 aa).

PPR repeat units follow at residues Leu-50 to Arg-80, Asp-81 to Leu-115, Asp-116 to Ser-150, Asp-151 to Gln-181, Asp-182 to Pro-216, Asp-217 to Pro-251, Asp-252 to Pro-286, Asn-287 to Asp-321, His-322 to Lys-352, Thr-353 to Leu-387, Asp-388 to Lys-418, and Arg-424 to Glu-454. The interval Val-459 to Val-534 is type E motif.

Belongs to the PPR family. PCMP-E subfamily.

This is Pentatricopeptide repeat-containing protein At5g59600 (PCMP-E1) from Arabidopsis thaliana (Mouse-ear cress).